A 478-amino-acid polypeptide reads, in one-letter code: ATP synthase subunit beta (478 aa).

160 to 167 contacts ATP; the sequence is GGAGVGKT.

It belongs to the ATPase alpha/beta chains family. F-type ATPases have 2 components, CF(1) - the catalytic core - and CF(0) - the membrane proton channel. CF(1) has five subunits: alpha(3), beta(3), gamma(1), delta(1), epsilon(1). CF(0) has three main subunits: a(1), b(2) and c(9-12). The alpha and beta chains form an alternating ring which encloses part of the gamma chain. CF(1) is attached to CF(0) by a central stalk formed by the gamma and epsilon chains, while a peripheral stalk is formed by the delta and b chains.

Its subcellular location is the cell inner membrane. It carries out the reaction ATP + H2O + 4 H(+)(in) = ADP + phosphate + 5 H(+)(out). Produces ATP from ADP in the presence of a proton gradient across the membrane. The catalytic sites are hosted primarily by the beta subunits. The chain is ATP synthase subunit beta from Orientia tsutsugamushi (strain Ikeda) (Rickettsia tsutsugamushi).